A 187-amino-acid chain; its full sequence is Frequenin-1 (187 aa).

Glycine 2 is lipidated: N-myristoyl glycine. EF-hand domains follow at residues 24–59, 60–95, 96–131, and 143–178; these read EKEIRQWHKGFLKDCPNGLLTEQGFIKIYKQFFPQG, DPSKFASLVFRVFDENNDGSIEFEEFIRALSVTSKG, NLDEKLQWAFRLYDVDNDGYITREEMYNIVDAIYQM, and TPQKRVDKIFDQMDKNHDGKLTLEEFREGSKADPRI. Residues aspartate 73, asparagine 75, aspartate 77, serine 79, glutamate 84, aspartate 109, aspartate 111, aspartate 113, tyrosine 115, glutamate 120, aspartate 156, asparagine 158, aspartate 160, lysine 162, and glutamate 167 each contribute to the Ca(2+) site.

This sequence belongs to the recoverin family. In terms of assembly, in contrast to Frq2, does not interact with ric8a. Enriched in synapses, such as the motor nerve endings at neuromuscular junctions. In the embryo, highly expressed in the ventral ganglia.

Its subcellular location is the cytoplasm. Functionally, ca(2+)-dependent modulation of synaptic efficacy. Also plays a role in axon terminal morphology. In Drosophila melanogaster (Fruit fly), this protein is Frequenin-1 (Frq1).